We begin with the raw amino-acid sequence, 1148 residues long: Envelopment polyprotein (1148 aa).

A signal peptide spans 1–23; it reads MGELSPVCLYLLLQGLLLCNTGA. Residues 24 to 495 are Lumenal-facing; that stretch reads ARNLNELKME…VPGLHGWATM (472 aa). 6 cysteine pairs are disulfide-bonded: cysteine 34–cysteine 159, cysteine 68–cysteine 165, cysteine 117–cysteine 136, cysteine 141–cysteine 146, cysteine 183–cysteine 193, and cysteine 218–cysteine 257. Residue asparagine 142 is glycosylated (N-linked (GlcNAc...) asparagine; by host). N-linked (GlcNAc...) asparagine; by host glycosylation occurs at asparagine 357. Disulfide bonds link cysteine 386/cysteine 445, cysteine 390/cysteine 399, cysteine 415/cysteine 434, and cysteine 462/cysteine 485. Asparagine 409 carries N-linked (GlcNAc...) asparagine; by host glycosylation. A helical transmembrane segment spans residues 496–516; sequence LLLLTFCFGWVLIPTITMILL. Residues 517–637 are Cytoplasmic-facing; the sequence is KILIAFAYLC…LSLFRYRSRF (121 aa). The tract at residues 526-543 is binding to the ribonucleoprotein; it reads CSKYNTDSKFRILIEKVK. 2 consecutive CCHC-type zinc fingers follow at residues 555-575 and 580-601; these read CEVCQYECETAKELESHRKSC and CPYCLNPSEATTSALQAHFKVC. 3 binding to the ribonucleoprotein regions span residues 598–615, 602–613, and 621–635; these read FKVCKLRSRFQENLRKSL, KLRSRFQENLRK, and MQGCYRTLSLFRYRS. Residues 621 to 644 enclose the ITAM domain; that stretch reads MQGCYRTLSLFRYRSRFFVGLVWC. The YxxL motif lies at 625–628; sequence YRTL. The chain crosses the membrane as a helical span at residues 638–658; the sequence is FVGLVWCVLLVHHLIVWAASA. Topologically, residues 659–1114 are lumenal; it reads ETQNLNAGWT…EWILGVLNGN (456 aa). Disulfide bonds link cysteine 745–cysteine 780, cysteine 749–cysteine 787, cysteine 761–cysteine 894, cysteine 775–cysteine 905, cysteine 790–cysteine 913, cysteine 816–cysteine 825, cysteine 833–cysteine 842, and cysteine 873–cysteine 877. Residues 767 to 787 form a fusion loop region; sequence YEYETGWGCNPPDCPGVGTGC. Asparagine 937 carries N-linked (GlcNAc...) asparagine; by host glycosylation. 5 disulfide bridges follow: cysteine 979/cysteine 1009, cysteine 1002/cysteine 1054, cysteine 1019/cysteine 1024, cysteine 1055/cysteine 1060, and cysteine 1094/cysteine 1098. A helical transmembrane segment spans residues 1115-1135; sequence WMVVAVLVVLLILSILLFTLC. Binding to the ribonucleoprotein regions lie at residues 1131–1143 and 1131–1148; these read LFTLCCPRRPSYR and LFTLCCPRRPSYRKEHKP. The Cytoplasmic portion of the chain corresponds to 1136–1148; the sequence is CPRRPSYRKEHKP.

It belongs to the hantavirus envelope glycoprotein family. As to quaternary structure, homodimer. Homotetramer; forms heterotetrameric Gn-Gc spikes in the pre-fusion conformation. Interacts (via C-terminus) with the nucleoprotein. Interacts with host TUFM; this interaction contributes to the virus-induced degradation of mitochondria by autophagy, which leads to degradation of host MAVS and inhibition of type I interferon (IFN) responses. Interacts with host MAP1LC3B; this interaction contributes to the virus-induced degradation of mitochondria by autophagy, which leads to degradation of host MAVS and inhibition of type I interferon (IFN) responses. Homodimer. Homotetramer; forms heterotetrameric Gn-Gc spikes in the pre-fusion conformation. Homotrimer; forms homotrimer in the post-fusion conformation at acidic pH. Interacts (via C-terminus) with the nucleoprotein. Envelope polyprotein precursor is quickly cleaved in vivo just after synthesis, presumably by host signal peptidase.

It localises to the virion membrane. Its subcellular location is the host cell surface. The protein localises to the host Golgi apparatus membrane. The protein resides in the host endoplasmic reticulum membrane. It is found in the host mitochondrion. Functionally, forms homotetramers with glycoprotein C at the surface of the virion. Attaches the virion to host cell receptors including integrin ITGAV/ITGB3. This attachment induces virion internalization predominantly through clathrin-dependent endocytosis. Mediates the assembly and budding of infectious virus particles through its interaction with the nucleocapsid protein and the viral genome. May dysregulate normal immune and endothelial cell responses through an ITAM motif. Translocates to mitochondria, binds to host TUFM and recruits MAP1LC3B. These interactions induce mitochondrial autophagy and therefore destruction of host MAVS leading to inhibition of type I interferon (IFN) responses. Concomitant breakdown of glycoprotein N is apparently prevented by the nucleoprotein that may inhibit Gn-stimulated autophagosome-lysosome fusion. Interacts with the viral genomic RNA. In terms of biological role, forms homotetramers with glycoprotein N at the surface of the virion. Attaches the virion to host cell receptors including integrin ITGAV/ITGB3. This attachment induces virion internalization predominantly through clathrin-dependent endocytosis. Class II fusion protein that promotes fusion of viral membrane with host endosomal membrane after endocytosis of the virion. The chain is Envelopment polyprotein (GP) from Homo sapiens (Human).